We begin with the raw amino-acid sequence, 332 residues long: Phenylalanine--tRNA ligase alpha subunit (332 aa).

Position 252 (E252) interacts with Mg(2+).

Belongs to the class-II aminoacyl-tRNA synthetase family. Phe-tRNA synthetase alpha subunit type 1 subfamily. In terms of assembly, tetramer of two alpha and two beta subunits. It depends on Mg(2+) as a cofactor.

The protein resides in the cytoplasm. It catalyses the reaction tRNA(Phe) + L-phenylalanine + ATP = L-phenylalanyl-tRNA(Phe) + AMP + diphosphate + H(+). This chain is Phenylalanine--tRNA ligase alpha subunit, found in Marinobacter nauticus (strain ATCC 700491 / DSM 11845 / VT8) (Marinobacter aquaeolei).